Consider the following 89-residue polypeptide: Elongation factor 1-beta (89 aa).

This sequence belongs to the EF-1-beta/EF-1-delta family.

Its function is as follows. Promotes the exchange of GDP for GTP in EF-1-alpha/GDP, thus allowing the regeneration of EF-1-alpha/GTP that could then be used to form the ternary complex EF-1-alpha/GTP/AAtRNA. The chain is Elongation factor 1-beta from Methanosarcina mazei (strain ATCC BAA-159 / DSM 3647 / Goe1 / Go1 / JCM 11833 / OCM 88) (Methanosarcina frisia).